Here is a 282-residue protein sequence, read N- to C-terminus: Bifunctional protein FolD (282 aa).

NADP(+) is bound by residues 165 to 167, S190, and I231; that span reads NRS.

The protein belongs to the tetrahydrofolate dehydrogenase/cyclohydrolase family. In terms of assembly, homodimer.

It catalyses the reaction (6R)-5,10-methylene-5,6,7,8-tetrahydrofolate + NADP(+) = (6R)-5,10-methenyltetrahydrofolate + NADPH. The catalysed reaction is (6R)-5,10-methenyltetrahydrofolate + H2O = (6R)-10-formyltetrahydrofolate + H(+). It functions in the pathway one-carbon metabolism; tetrahydrofolate interconversion. Catalyzes the oxidation of 5,10-methylenetetrahydrofolate to 5,10-methenyltetrahydrofolate and then the hydrolysis of 5,10-methenyltetrahydrofolate to 10-formyltetrahydrofolate. In Clostridium botulinum (strain Kyoto / Type A2), this protein is Bifunctional protein FolD.